We begin with the raw amino-acid sequence, 309 residues long: uncharacterized protein (309 aa).

Residues 1–32 (MTGTAPVSRRQYLGTAGAIIGTTAGCLTGADA) constitute a signal peptide (tat-type signal).

The protein belongs to the bacterial solute-binding protein 1 family. WtpA subfamily. Post-translationally, predicted to be exported by the Tat system. The position of the signal peptide cleavage has not been experimentally proven.

This is an uncharacterized protein from Halobacterium salinarum (strain ATCC 700922 / JCM 11081 / NRC-1) (Halobacterium halobium).